A 202-amino-acid chain; its full sequence is Prostamide/prostaglandin F synthase (202 aa).

Position 108 is a phosphotyrosine (Tyr108).

The protein belongs to the peroxiredoxin-like PRXL2 family. Prostamide/prostaglandin F synthase subfamily.

It is found in the cytoplasm. It localises to the cytosol. It carries out the reaction prostaglandin H2 + [thioredoxin]-dithiol = prostaglandin F2alpha + [thioredoxin]-disulfide. It catalyses the reaction prostamide F2alpha + [thioredoxin]-disulfide = prostamide H2 + [thioredoxin]-dithiol. Catalyzes the reduction of prostaglandin-ethanolamide H(2) (prostamide H(2)) to prostamide F(2alpha) with NADPH as proton donor. Also able to reduce prostaglandin H(2) to prostaglandin F(2alpha). The polypeptide is Prostamide/prostaglandin F synthase (PRXL2B) (Sus scrofa (Pig)).